A 218-amino-acid polypeptide reads, in one-letter code: Large ribosomal subunit protein uL4 (218 aa).

The disordered stretch occupies residues 55 to 83 (THATKTRGMVSGGGKKPWKQKGTGRARQG).

This sequence belongs to the universal ribosomal protein uL4 family. As to quaternary structure, part of the 50S ribosomal subunit.

In terms of biological role, one of the primary rRNA binding proteins, this protein initially binds near the 5'-end of the 23S rRNA. It is important during the early stages of 50S assembly. It makes multiple contacts with different domains of the 23S rRNA in the assembled 50S subunit and ribosome. Its function is as follows. Forms part of the polypeptide exit tunnel. The protein is Large ribosomal subunit protein uL4 of Bifidobacterium longum (strain DJO10A).